Consider the following 532-residue polypeptide: Neutral amino acid transporter A (532 aa).

M1 is subject to N-acetylmethionine. Positions 1 to 29 (MEKSGETNGYLDGTQAEPAAGPRTPETAM) are disordered. Topologically, residues 1 to 41 (MEKSGETNGYLDGTQAEPAAGPRTPETAMGKSQRCASFFRR) are cytoplasmic. The next 3 helical transmembrane spans lie at 42–62 (HALVLLTVSGVLVGAGMGAAL), 88–108 (MIILPLVVCSLVSGAASLDAS), and 119–139 (AYFGLTTLSASALAVALAFII). Residues 140 to 216 (KPGAGAQTLQ…VTKEKIPVVT (77 aa)) lie on the Extracellular side of the membrane. 2 N-linked (GlcNAc...) asparagine glycosylation sites follow: N201 and N206. 6 consecutive transmembrane segments (helical) span residues 217–237 (DVEGMNILGLVLFALVLGVAL), 257–277 (ATMVLVSWIMWYVPIGIMFLI), 298–318 (IFASMLGHVIHGGIVLPLVYF), 328–348 (FLLGLLTPFATAFATCSSSAT), 373–393 (IGATVNMDGAAIFQCVAAVFI), and 418–438 (VGAAGVPAGGVLTIAIILEAI). Residues 495–532 (EAIPNSKSEEETSPLVTHQNPAGPVAIAPELESKESVL) are disordered. Phosphoserine is present on residues S507, S527, and S530.

It belongs to the dicarboxylate/amino acid:cation symporter (DAACS) (TC 2.A.23) family. SLC1A4 subfamily.

The protein resides in the membrane. It localises to the melanosome. The catalysed reaction is L-threonine(in) + Na(+)(in) = L-threonine(out) + Na(+)(out). It catalyses the reaction L-serine(in) + Na(+)(in) = L-serine(out) + Na(+)(out). It carries out the reaction L-cysteine(in) + Na(+)(in) = L-cysteine(out) + Na(+)(out). The enzyme catalyses L-alanine(in) + Na(+)(in) = L-alanine(out) + Na(+)(out). The catalysed reaction is L-proline(in) + Na(+)(in) = L-proline(out) + Na(+)(out). It catalyses the reaction 4-hydroxy-L-proline(in) + Na(+)(in) = 4-hydroxy-L-proline(out) + Na(+)(out). Functionally, sodium-dependent neutral amino-acid transporter that mediates transport of alanine, serine, cysteine, proline, hydroxyproline and threonine. This chain is Neutral amino acid transporter A (Slc1a4), found in Mus musculus (Mouse).